We begin with the raw amino-acid sequence, 97 residues long: MKLRPLHDRVVIRRSEEETKTAGGIVLPGSAAEKPNRGEVVAVGTGRVLDNGEVRALAVKVGDKVVFGPYSGSNTVKVDGEDLLVMSENEILAVVEA.

This sequence belongs to the GroES chaperonin family. As to quaternary structure, heptamer of 7 subunits arranged in a ring. Interacts with the chaperonin GroEL.

It is found in the cytoplasm. Together with the chaperonin GroEL, plays an essential role in assisting protein folding. The GroEL-GroES system forms a nano-cage that allows encapsulation of the non-native substrate proteins and provides a physical environment optimized to promote and accelerate protein folding. GroES binds to the apical surface of the GroEL ring, thereby capping the opening of the GroEL channel. This chain is Co-chaperonin GroES, found in Stutzerimonas stutzeri (Pseudomonas stutzeri).